Consider the following 318-residue polypeptide: Protein LplB (318 aa).

Helical transmembrane passes span 35–55 (LIPG…GVLI), 94–114 (LMLA…LALL), 130–150 (FIYV…FVFF), 182–202 (IVMQ…LAAL), 236–256 (IIVL…EQVY), and 289–309 (AVGL…NYIA). An ABC transmembrane type-1 domain is found at 90-305 (LRNTLMLASL…VVGIILIFGA (216 aa)).

It belongs to the binding-protein-dependent transport system permease family. MalFG subfamily.

The protein localises to the cell membrane. The protein is Protein LplB (lplB) of Bacillus subtilis (strain 168).